Here is a 109-residue protein sequence, read N- to C-terminus: Aquaporin-2 (109 aa).

Topologically, residues 1–6 (SIAFSK) are cytoplasmic. Residues 7–27 (AVFSEFLATLLFVFFGLGSAL) form a helical membrane-spanning segment. Residues 28-35 (NWPQALPS) are Extracellular-facing. A helical transmembrane segment spans residues 36–54 (GLQIAMAFGLAIGTLVQTL). At 55–59 (GHISG) the chain is on the cytoplasmic side. Residues 60–69 (AHINPAVTVA) constitute an intramembrane region (discontinuously helical). Positions 63-65 (NPA) match the NPA 1 motif. The Cytoplasmic portion of the chain corresponds to 70 to 80 (CLVGCHVSFLR). Residues 81-102 (AIFYVAAQLLGAVAGAALLHEL) traverse the membrane as a helical segment. Over 103-109 (TPPDIRG) the chain is Extracellular.

This sequence belongs to the MIP/aquaporin (TC 1.A.8) family. In terms of assembly, homotetramer. In terms of processing, serine phosphorylation is necessary and sufficient for expression at the apical membrane. Endocytosis is not phosphorylation-dependent. N-glycosylated.

Its subcellular location is the apical cell membrane. The protein resides in the basolateral cell membrane. The protein localises to the cell membrane. It localises to the cytoplasmic vesicle membrane. It is found in the golgi apparatus. Its subcellular location is the trans-Golgi network membrane. The enzyme catalyses H2O(in) = H2O(out). It carries out the reaction glycerol(in) = glycerol(out). In terms of biological role, forms a water-specific channel that provides the plasma membranes of renal collecting duct with high permeability to water, thereby permitting water to move in the direction of an osmotic gradient. Plays an essential role in renal water homeostasis. Could also be permeable to glycerol. The sequence is that of Aquaporin-2 from Orycteropus afer (Aardvark).